The primary structure comprises 359 residues: Phospho-N-acetylmuramoyl-pentapeptide-transferase (359 aa).

10 helical membrane-spanning segments follow: residues 3-23, 55-75, 80-100, 117-137, 156-176, 187-207, 231-251, 255-275, 280-300, and 334-354; these read QILIAVAIALTVSILLTPALI, VAIIAGIWAGYLGTHLAGLAF, ISASGLLVLSLATVLGIVGFL, TAKTIGQVAAAVLFGVLALGF, IATVTLAPGLFVLFCVVVVSA, LDGLAAGSMAMVTAAYVLITF, LAIVAAATAGACIGFLWWNAA, IFMGDTGSLALGGIIAGISVT, ILAVVLGSLFVAEVSSVVLQI, and FWLLTAIACGLGVALFYGEWL.

The protein belongs to the glycosyltransferase 4 family. MraY subfamily. It depends on Mg(2+) as a cofactor.

The protein localises to the cell membrane. It carries out the reaction UDP-N-acetyl-alpha-D-muramoyl-L-alanyl-gamma-D-glutamyl-meso-2,6-diaminopimeloyl-D-alanyl-D-alanine + di-trans,octa-cis-undecaprenyl phosphate = di-trans,octa-cis-undecaprenyl diphospho-N-acetyl-alpha-D-muramoyl-L-alanyl-D-glutamyl-meso-2,6-diaminopimeloyl-D-alanyl-D-alanine + UMP. Its pathway is cell wall biogenesis; peptidoglycan biosynthesis. Functionally, catalyzes the initial step of the lipid cycle reactions in the biosynthesis of the cell wall peptidoglycan: transfers peptidoglycan precursor phospho-MurNAc-pentapeptide from UDP-MurNAc-pentapeptide onto the lipid carrier undecaprenyl phosphate, yielding undecaprenyl-pyrophosphoryl-MurNAc-pentapeptide, known as lipid I. This is Phospho-N-acetylmuramoyl-pentapeptide-transferase from Mycobacterium avium (strain 104).